Here is a 1314-residue protein sequence, read N- to C-terminus: E3 ubiquitin-protein ligase RNF123 (1314 aa).

Ala-2 carries the N-acetylalanine modification. The B30.2/SPRY domain occupies 74–254 (VDNEEEESQG…VAFNFGSRPL (181 aa)). Ser-675 carries the phosphoserine modification. At Arg-683 the chain carries Asymmetric dimethylarginine. The interval 968–974 (WILVRLW) is interaction with NFKB1. The Zn(2+) site is built by Cys-1254, Cys-1257, Cys-1269, His-1271, Cys-1274, Cys-1277, Cys-1288, and Cys-1291. The RING-type zinc finger occupies 1254–1292 (CPICYAHPISAVFQPCGHKSCKACINQHLMNNKDCFFCK).

Component of the KPC complex composed of RNF123/KPC1 and UBAC1/KPC2. Interacts with UBAC1 and CDKN1B via its N-terminal domain. Interacts with RIGI (via N-terminus) and IFIH1 (via N-terminus). Post-translationally, ubiquitinated, leading to its degradation. Deubiquitinated by USP19, thereby stimulating CDKN1B ubiquitin-dependent degradation.

Its subcellular location is the cytoplasm. It catalyses the reaction S-ubiquitinyl-[E2 ubiquitin-conjugating enzyme]-L-cysteine + [acceptor protein]-L-lysine = [E2 ubiquitin-conjugating enzyme]-L-cysteine + N(6)-ubiquitinyl-[acceptor protein]-L-lysine.. The protein operates within protein modification; protein ubiquitination. In terms of biological role, catalytic subunit of the KPC complex that acts as E3 ubiquitin-protein ligase. Promotes the ubiquitination and proteasome-mediated degradation of CDKN1B which is the cyclin-dependent kinase inhibitor at the G0-G1 transition of the cell cycle. Also acts as a key regulator of the NF-kappa-B signaling by promoting maturation of the NFKB1 component of NF-kappa-B: acts by catalyzing ubiquitination of the NFKB1 p105 precursor, leading to limited proteasomal degradation of NFKB1 p105 and generation of the active NFKB1 p50 subunit. Also functions as an inhibitor of innate antiviral signaling mediated by RIGI and IFIH1 independently of its E3 ligase activity. Interacts with the N-terminal CARD domains of RIGI and IFIH1 and competes with the downstream adapter MAVS. This Homo sapiens (Human) protein is E3 ubiquitin-protein ligase RNF123.